Here is a 132-residue protein sequence, read N- to C-terminus: Small ribosomal subunit protein uS12 (132 aa).

Position 89 is a 3-methylthioaspartic acid (Asp89).

Belongs to the universal ribosomal protein uS12 family. Part of the 30S ribosomal subunit. Contacts proteins S8 and S17. May interact with IF1 in the 30S initiation complex.

Functionally, with S4 and S5 plays an important role in translational accuracy. Its function is as follows. Interacts with and stabilizes bases of the 16S rRNA that are involved in tRNA selection in the A site and with the mRNA backbone. Located at the interface of the 30S and 50S subunits, it traverses the body of the 30S subunit contacting proteins on the other side and probably holding the rRNA structure together. The combined cluster of proteins S8, S12 and S17 appears to hold together the shoulder and platform of the 30S subunit. The protein is Small ribosomal subunit protein uS12 of Campylobacter curvus (strain 525.92).